A 54-amino-acid chain; its full sequence is uncharacterized protein (54 aa).

The signal sequence occupies residues 1 to 23; that stretch reads MKELIFFLLIIVILFVVFMVVSS.

This is an uncharacterized protein from Acheta domesticus (House cricket).